Here is a 940-residue protein sequence, read N- to C-terminus: MPRRLRPTRLEHVVDGHALRARLSAAALDSIGNEAEQRARAIDILKQALFRGRMIAKERLENGASGVETSRLLSGVTDEVITALYDFTTVHVFRARNPTEGERLCLLAVGGYGRGTLAPFSDIDLLFLRPYKQTPHAESVIEYMLYALWDLGFKVGHASRTIEECVRLSKEDFTIRTSILEARRLTGDERLAEDLKKRFRDEVMKATGAQFVAAKLKERDDRQARAGASRYMVEPNVKEGKGGLRDLHTLMWIAEYLHPVDRPEDVFKMEVFSIRETKAFIRAFDFLHAVRAHLHFTTGRPEERLTFDLQPEIARRMGYGDRGDAPAVERFMRRYFLIAKEVGTLTRAFSAKLEAEHFKNEPKGISRFLPGARPKRKALDVEGFYEDGGRLNIEGQEIFEADPVNLIRLFKIADERDLDLHPDAFTAVTRALPLITSRVRRDPDACRAFLDLLARGKRSYRTLTLMNDAGVLGRFIPEFGRVVAQMQFNMYHSYTVDEHTLRAVGVIGDIAAGRLVDDHPLAVSIMPLIEDREALFLAMLLHDTGKGGVGGQEKAGARSARSACERLGVERSKVELVAWLVENHLVMSDFAQKRDVSDPGTVAAFARIVENPERLRLLLVITVADIRAVGPGVWNGWKGQLLRELYNATEAVFRGGRGSDAAANVQRHQESTAEAARAALLETDPAAKGWVAAMENAYFSAFSQDDLFHHAELARRAAIQGGAAAEGQVRPGSNAAEVVIAAKDRRGLFADLALAISSLGGNVVGARVFTSRQGQALDVFYVQDVTGAPFGCENPRALRRLADALEAAGKGDALAVEPRRGSEQTRAAAFAIAPSVTIDNDASNDATVVEASGRDRPGLLHALAKTLADSALSIQSAHIDGYGERAVDAFYVQTTEGGKVTDTRKLNALKADLLAALEQNEASAPAARPGLRRARASVAR.

A uridylyltransferase region spans residues 1–379 (MPRRLRPTRL…PGARPKRKAL (379 aa)). The interval 380–736 (DVEGFYEDGG…GQVRPGSNAA (357 aa)) is uridylyl-removing. One can recognise an HD domain in the interval 496-618 (VDEHTLRAVG…VENPERLRLL (123 aa)). 2 ACT domains span residues 737–821 (EVVI…PRRG) and 848–929 (VVEA…AARP).

It belongs to the GlnD family. Mg(2+) is required as a cofactor.

It catalyses the reaction [protein-PII]-L-tyrosine + UTP = [protein-PII]-uridylyl-L-tyrosine + diphosphate. The catalysed reaction is [protein-PII]-uridylyl-L-tyrosine + H2O = [protein-PII]-L-tyrosine + UMP + H(+). Its activity is regulated as follows. Uridylyltransferase (UTase) activity is inhibited by glutamine, while glutamine activates uridylyl-removing (UR) activity. In terms of biological role, modifies, by uridylylation and deuridylylation, the PII regulatory proteins (GlnB and homologs), in response to the nitrogen status of the cell that GlnD senses through the glutamine level. Under low glutamine levels, catalyzes the conversion of the PII proteins and UTP to PII-UMP and PPi, while under higher glutamine levels, GlnD hydrolyzes PII-UMP to PII and UMP (deuridylylation). Thus, controls uridylylation state and activity of the PII proteins, and plays an important role in the regulation of nitrogen assimilation and metabolism. This is Bifunctional uridylyltransferase/uridylyl-removing enzyme from Caulobacter vibrioides (strain ATCC 19089 / CIP 103742 / CB 15) (Caulobacter crescentus).